The chain runs to 206 residues: tRNA(Phe) 7-((3-amino-3-carboxypropyl)-4-demethylwyosine(37)-N(4))-methyltransferase 2 (206 aa).

Belongs to the TYW3 family.

It carries out the reaction 4-demethyl-7-[(3S)-3-amino-3-carboxypropyl]wyosine(37) in tRNA(Phe) + S-adenosyl-L-methionine = 7-[(3S)-3-amino-3-carboxypropyl]wyosine(37) in tRNA(Phe) + S-adenosyl-L-homocysteine + H(+). Functionally, S-adenosyl-L-methionine-dependent methyltransferase that acts as a component of the wyosine derivatives biosynthesis pathway. Probably methylates N-4 position of wybutosine-86 to produce wybutosine-72. This Pyrococcus abyssi (strain GE5 / Orsay) protein is tRNA(Phe) 7-((3-amino-3-carboxypropyl)-4-demethylwyosine(37)-N(4))-methyltransferase 2.